The chain runs to 401 residues: MNDLISYVKKTLGACECGTVHHPLTVEKIAIGDNAVEQELPAFVKSASYKKAAVIYDETTGRLAGKRIASLLEETAETVPVLLEANEAGDVTADEQTLVSALIGVPIDADVLIAAGAGTIHDIVRFCAYQRGIPFISVPTAPSVDGFTSAGAPLILKGKKQTVQTTAPIALFADLELLCQAPQNMVAAGFGDMLGKVTSLADWEISRLLAGEPYCPAASRLTREALDQCLDRKDDIAAKMRDGIEKLMESLILSGLVMLVLDHSRPASGGEHHLSHYLEMKALENNKRQVLHGAKVGCSAIMLTDIYRSLIGASLGDQHAEQAIRSVYEKLPDGKKMAEWMRRIGGPVSFKELDVEEELVREALAYAHQLRDRYTGLKIINQYGLLPGLLGKGPGVKGVKM.

Residues D57, 118–122 (GTIHD), and 140–143 (TAPS) contribute to the NAD(+) site. Position 145 (D145) interacts with substrate. S149 is a binding site for NAD(+). D192 lines the substrate pocket. Residues D192 and H272 each coordinate Ni(2+). H276 serves as a coordination point for substrate. H292 is a Ni(2+) binding site.

It belongs to the glycerol-1-phosphate dehydrogenase family. Homodimer. Ni(2+) serves as cofactor.

The protein resides in the cytoplasm. The enzyme catalyses sn-glycerol 1-phosphate + NAD(+) = dihydroxyacetone phosphate + NADH + H(+). The catalysed reaction is sn-glycerol 1-phosphate + NADP(+) = dihydroxyacetone phosphate + NADPH + H(+). Catalyzes the NAD(P)H-dependent reduction of dihydroxyacetonephosphate (DHAP or glycerone phosphate) to glycerol 1-phosphate (G1P). The G1P thus generated is probably used for the synthesis of phosphoglycerolipids in Gram-positive bacterial species. This Bacillus licheniformis (strain ATCC 14580 / DSM 13 / JCM 2505 / CCUG 7422 / NBRC 12200 / NCIMB 9375 / NCTC 10341 / NRRL NRS-1264 / Gibson 46) protein is Glycerol-1-phosphate dehydrogenase [NAD(P)+].